The following is a 416-amino-acid chain: Gamma-glutamyl phosphate reductase (416 aa).

The protein belongs to the gamma-glutamyl phosphate reductase family.

The protein localises to the cytoplasm. It catalyses the reaction L-glutamate 5-semialdehyde + phosphate + NADP(+) = L-glutamyl 5-phosphate + NADPH + H(+). Its pathway is amino-acid biosynthesis; L-proline biosynthesis; L-glutamate 5-semialdehyde from L-glutamate: step 2/2. Catalyzes the NADPH-dependent reduction of L-glutamate 5-phosphate into L-glutamate 5-semialdehyde and phosphate. The product spontaneously undergoes cyclization to form 1-pyrroline-5-carboxylate. This chain is Gamma-glutamyl phosphate reductase, found in Vibrio atlanticus (strain LGP32) (Vibrio splendidus (strain Mel32)).